The chain runs to 612 residues: Bifunctional lycopene cyclase/phytoene synthase (612 aa).

The interval 1-268 (MGWEYAQVHL…IVFGLIACDN (268 aa)) is lycopene beta-cyclase. The next 7 helical transmembrane spans lie at 3–23 (WEYAQVHLKYTIPFGVVLAAV), 31–51 (LDVFKLVFLITVSFFWVVKGL), 112–130 (LFFFVIQTFNTSLLYMILS), 148–168 (IAGQILFASAIIFGLVSVSSG), 171–191 (GMYMGLILIWACPFLLFLWSI), 203–223 (NTALPIALPTLYLWVVDTFAL), and 246–266 (IEEAVFFLLTNTLIVFGLIAC). The phytoene synthase stretch occupies residues 275 to 612 (TFPEHFPRTK…IRVAWSALNK (338 aa)).

In the N-terminal section; belongs to the lycopene beta-cyclase family. It in the C-terminal section; belongs to the phytoene/squalene synthase family.

The protein localises to the membrane. It carries out the reaction all-trans-lycopene = gamma-carotene. It catalyses the reaction gamma-carotene = all-trans-beta-carotene. The catalysed reaction is 2 (2E,6E,10E)-geranylgeranyl diphosphate = 15-cis-phytoene + 2 diphosphate. Its pathway is carotenoid biosynthesis; beta-carotene biosynthesis. It participates in carotenoid biosynthesis; phytoene biosynthesis; all-trans-phytoene from geranylgeranyl diphosphate: step 1/1. Functionally, bifunctional enzyme; part of the car gene cluster that mediates the biosynthesis of neurosporaxanthin, a carboxylic apocarotenoid acting as an essential protective pigments and leading to orange pigmentation. CarAR catalyzes the first step of the pathway by converting geranylgeranyl diphosphate to phytoene, as well as the later cyclization step that transforms the carB product lycopene into gamma-carotene. CarAR also converts part of gamma-carotene into beta-carotene. Neurosporaxanthin is synthesized from geranyl-geranyl pyrophosphate (GGPP) through several enzymatic activities. Phytoene synthase activity performed by the bifunctional enzyme carAR first produces phytoene from geranyl-geranyl pyrophosphate (GGPP). The phytoene dehydrogenase carB then introduces 4 desaturations to lead to lycopene which is substrate of the carotene cyclase activity of carAR that leads to the production of gamma-carotene. CarB then performs a 5th desaturation reaction to yield torulene. Torulene is the substrate of the dioxidase carT that breaks the molecule, removing five carbon atoms to yield beta-apo-4'-carotenal, whereas the aldehyde dehydrogenase carD mediates the last step by converting beta-apo-4'-carotenal into neurosporaxanthin. The protein is Bifunctional lycopene cyclase/phytoene synthase of Fusarium fujikuroi (Bakanae and foot rot disease fungus).